Reading from the N-terminus, the 398-residue chain is Succinate--CoA ligase [ADP-forming] subunit beta (398 aa).

In terms of domain architecture, ATP-grasp spans 9-253; the sequence is KEILNSFGVR…VREENATEVE (245 aa). Residues lysine 50, 57–59, valine 106, and glutamate 116 contribute to the ATP site; that span reads GRG. Residues asparagine 208 and aspartate 222 each coordinate Mg(2+). Residues asparagine 273 and 330–332 contribute to the substrate site; that span reads GIV.

This sequence belongs to the succinate/malate CoA ligase beta subunit family. As to quaternary structure, heterotetramer of two alpha and two beta subunits. Mg(2+) serves as cofactor.

It catalyses the reaction succinate + ATP + CoA = succinyl-CoA + ADP + phosphate. The catalysed reaction is GTP + succinate + CoA = succinyl-CoA + GDP + phosphate. It participates in carbohydrate metabolism; tricarboxylic acid cycle; succinate from succinyl-CoA (ligase route): step 1/1. In terms of biological role, succinyl-CoA synthetase functions in the citric acid cycle (TCA), coupling the hydrolysis of succinyl-CoA to the synthesis of either ATP or GTP and thus represents the only step of substrate-level phosphorylation in the TCA. The beta subunit provides nucleotide specificity of the enzyme and binds the substrate succinate, while the binding sites for coenzyme A and phosphate are found in the alpha subunit. The protein is Succinate--CoA ligase [ADP-forming] subunit beta of Christiangramia forsetii (strain DSM 17595 / CGMCC 1.15422 / KT0803) (Gramella forsetii).